Here is a 207-residue protein sequence, read N- to C-terminus: dITP/XTP pyrophosphatase (207 aa).

Residue Ser7–Lys12 participates in substrate binding. Asp72 acts as the Proton acceptor in catalysis. Residue Asp72 participates in Mg(2+) binding. Residues Ser73, Phe155 to Asp158, Lys183, and His188 to Arg189 each bind substrate.

This sequence belongs to the HAM1 NTPase family. Homodimer. The cofactor is Mg(2+).

It carries out the reaction XTP + H2O = XMP + diphosphate + H(+). It catalyses the reaction dITP + H2O = dIMP + diphosphate + H(+). The catalysed reaction is ITP + H2O = IMP + diphosphate + H(+). Its function is as follows. Pyrophosphatase that catalyzes the hydrolysis of nucleoside triphosphates to their monophosphate derivatives, with a high preference for the non-canonical purine nucleotides XTP (xanthosine triphosphate), dITP (deoxyinosine triphosphate) and ITP. Seems to function as a house-cleaning enzyme that removes non-canonical purine nucleotides from the nucleotide pool, thus preventing their incorporation into DNA/RNA and avoiding chromosomal lesions. In Corynebacterium diphtheriae (strain ATCC 700971 / NCTC 13129 / Biotype gravis), this protein is dITP/XTP pyrophosphatase.